Here is a 1063-residue protein sequence, read N- to C-terminus: Coiled-coil domain-containing protein 187 (1063 aa).

Disordered regions lie at residues 1–41 (MPTL…AADW), 62–184 (RWPG…SRLH), 219–278 (RVEA…KDED), 300–319 (PPPV…PALT), 392–484 (RKGG…ERLG), 496–539 (GQAC…ATQP), and 551–658 (WEDP…LEEK). Positions 111–124 (SSVSSGRLSCSSGG) are enriched in low complexity. Over residues 146–160 (RKSDARLEQLRDKIR) the composition is skewed to basic and acidic residues. Positions 163–181 (AWQQGSCASLGTSAPSSAS) are enriched in polar residues. Over residues 219 to 233 (RVEAKASHGQGRELS) the composition is skewed to basic and acidic residues. 2 stretches are compositionally biased toward basic and acidic residues: residues 431-442 (TERKHSSLERAR) and 472-484 (SFQR…ERLG). Over residues 508–517 (QRQGPSSQRP) the composition is skewed to low complexity. The stretch at 816–851 (HLRHKQAQLQALETTAKVLKQRVDSLTAKLQGAEAL) forms a coiled coil. Positions 1010–1030 (PRSCGKGDPADRPWAGWSGGR) are disordered.

This chain is Coiled-coil domain-containing protein 187, found in Homo sapiens (Human).